We begin with the raw amino-acid sequence, 376 residues long: Queuine tRNA-ribosyltransferase (376 aa).

Asp-90 (proton acceptor) is an active-site residue. Substrate contacts are provided by residues 90–94 (DSGGF), Asp-144, Gln-193, and Gly-220. The segment at 251–257 (GVGTPED) is RNA binding. The active-site Nucleophile is the Asp-270. Residues 275–279 (TRNAR) form an RNA binding; important for wobble base 34 recognition region. Positions 308, 310, 313, and 339 each coordinate Zn(2+).

It belongs to the queuine tRNA-ribosyltransferase family. Homodimer. Within each dimer, one monomer is responsible for RNA recognition and catalysis, while the other monomer binds to the replacement base PreQ1. The cofactor is Zn(2+).

The enzyme catalyses 7-aminomethyl-7-carbaguanine + guanosine(34) in tRNA = 7-aminomethyl-7-carbaguanosine(34) in tRNA + guanine. The protein operates within tRNA modification; tRNA-queuosine biosynthesis. Catalyzes the base-exchange of a guanine (G) residue with the queuine precursor 7-aminomethyl-7-deazaguanine (PreQ1) at position 34 (anticodon wobble position) in tRNAs with GU(N) anticodons (tRNA-Asp, -Asn, -His and -Tyr). Catalysis occurs through a double-displacement mechanism. The nucleophile active site attacks the C1' of nucleotide 34 to detach the guanine base from the RNA, forming a covalent enzyme-RNA intermediate. The proton acceptor active site deprotonates the incoming PreQ1, allowing a nucleophilic attack on the C1' of the ribose to form the product. After dissociation, two additional enzymatic reactions on the tRNA convert PreQ1 to queuine (Q), resulting in the hypermodified nucleoside queuosine (7-(((4,5-cis-dihydroxy-2-cyclopenten-1-yl)amino)methyl)-7-deazaguanosine). The chain is Queuine tRNA-ribosyltransferase from Cupriavidus taiwanensis (strain DSM 17343 / BCRC 17206 / CCUG 44338 / CIP 107171 / LMG 19424 / R1) (Ralstonia taiwanensis (strain LMG 19424)).